A 383-amino-acid chain; its full sequence is Cobalt-precorrin-5B C(1)-methyltransferase (383 aa).

The protein belongs to the CbiD family.

The enzyme catalyses Co-precorrin-5B + S-adenosyl-L-methionine = Co-precorrin-6A + S-adenosyl-L-homocysteine. Its pathway is cofactor biosynthesis; adenosylcobalamin biosynthesis; cob(II)yrinate a,c-diamide from sirohydrochlorin (anaerobic route): step 6/10. In terms of biological role, catalyzes the methylation of C-1 in cobalt-precorrin-5B to form cobalt-precorrin-6A. The polypeptide is Cobalt-precorrin-5B C(1)-methyltransferase (Prochlorococcus marinus (strain MIT 9313)).